Here is a 117-residue protein sequence, read N- to C-terminus: UPF0342 protein BLi01058/BL02870 (117 aa).

Belongs to the UPF0342 family.

This chain is UPF0342 protein BLi01058/BL02870, found in Bacillus licheniformis (strain ATCC 14580 / DSM 13 / JCM 2505 / CCUG 7422 / NBRC 12200 / NCIMB 9375 / NCTC 10341 / NRRL NRS-1264 / Gibson 46).